Here is a 210-residue protein sequence, read N- to C-terminus: MSVPTNRPGLFITLEGGDGVGKSTQAALLERWLLGLGRAVVRTREPGGTDLGAEIREIVLHRRGDIAPRAEALLYAADRAHHVATVVRPALERGEVVLQDRYLDSSVAYQGAGRVLDAGEVRELSLWAAEGLLPDLTILLDLDETTARARLGSARTRYDRLEAERSEFHARVRAAYLALAAEPQRFLVVDASRPVEEIAAEIRCRLDGRV.

16–23 is an ATP binding site; it reads GGDGVGKS.

Belongs to the thymidylate kinase family.

It carries out the reaction dTMP + ATP = dTDP + ADP. Phosphorylation of dTMP to form dTDP in both de novo and salvage pathways of dTTP synthesis. This chain is Thymidylate kinase, found in Leifsonia xyli subsp. xyli (strain CTCB07).